We begin with the raw amino-acid sequence, 396 residues long: Inositol polyphosphate 1-phosphatase (396 aa).

Asp54 is a Li(+) binding site. Glu79 lines the Mg(2+) pocket. A Li(+)-binding site is contributed by Glu80. Residues Asp153 and Ile155 each coordinate Mg(2+). Positions 156, 157, 158, 264, 266, 286, 287, 290, and 308 each coordinate 1D-myo-inositol 1,4-bisphosphate. Residue Asp313 participates in Mg(2+) binding. At Ser314 the chain carries Phosphoserine.

This sequence belongs to the inositol monophosphatase superfamily. In terms of assembly, monomer. Mg(2+) is required as a cofactor.

The catalysed reaction is 1D-myo-inositol 1,4-bisphosphate + H2O = 1D-myo-inositol 4-phosphate + phosphate. It carries out the reaction 1D-myo-inositol 1,3,4-trisphosphate + H2O = 1D-myo-inositol 3,4-bisphosphate + phosphate. The protein operates within signal transduction; phosphatidylinositol signaling pathway. Inhibited by Li(+). Mg(2+)-dependent phosphatase that catalyzes the hydrolysis of the 1-position phosphate from inositol 1,4-bisphosphate and inositol 1,3,4-trisphosphate and participates in inositol phosphate metabolism. This Mus musculus (Mouse) protein is Inositol polyphosphate 1-phosphatase.